A 275-amino-acid chain; its full sequence is Voltage-dependent calcium channel gamma-5 subunit (275 aa).

A run of 4 helical transmembrane segments spans residues 8–28, 103–123, 129–149, and 181–201; these read ALTL…GIAV, FPLV…IGHI, ILAF…VVGL, and FAAI…YLFM.

The protein belongs to the PMP-22/EMP/MP20 family. CACNG subfamily. The L-type calcium channel is composed of five subunits: alpha-1, alpha-2/delta, beta and gamma. Acts as an auxiliary subunit for AMPA-selective glutamate receptors (AMPARs). Found in a complex with GRIA1, GRIA2, GRIA3, GRIA4, CNIH2, CNIH3, CACNG2, CACNG3, CACNG4, CACNG7 and CACNG8. Interacts with GRIA1, GRIA2, GRIA3 and GRIA4. In terms of tissue distribution, brain. Enriched in Bergman glia, as well as a variety of neuronal populations including locus coeruleus, olfactory bulb, lateral septal nucleus, interpeduncular nucleus, and the CA2 and rostral/medial CA1 regions of hippocampus.

It is found in the membrane. Its subcellular location is the postsynaptic density membrane. In terms of biological role, regulates the gating properties of AMPA-selective glutamate receptors (AMPARs). Modulates their gating properties by accelerating their rates of activation, deactivation and desensitization. Displays subunit-specific AMPA receptor regulation. Shows specificity for GRIA1, GRIA4 and the long isoform of GRIA2. Thought to stabilize the calcium channel in an inactivated (closed) state. This chain is Voltage-dependent calcium channel gamma-5 subunit (Cacng5), found in Mus musculus (Mouse).